Reading from the N-terminus, the 163-residue chain is Small ribosomal subunit protein bS18c (163 aa).

Disordered regions lie at residues 1–52 and 144–163; these read MYIS…IGPG and NLRNSNQNLRNNNRNLSSDC. Basic residues predominate over residues 7-48; the sequence is PFRKSKQPFRKSKQTFHKSKQPFRKFKQPFRKSKQPFRRRSR.

It belongs to the bacterial ribosomal protein bS18 family. As to quaternary structure, part of the 30S ribosomal subunit.

It is found in the plastid. It localises to the chloroplast. This is Small ribosomal subunit protein bS18c from Sorghum bicolor (Sorghum).